A 179-amino-acid chain; its full sequence is Large ribosomal subunit protein uL5 (179 aa).

The protein belongs to the universal ribosomal protein uL5 family. Part of the 50S ribosomal subunit; part of the 5S rRNA/L5/L18/L25 subcomplex. Contacts the 5S rRNA and the P site tRNA. Forms a bridge to the 30S subunit in the 70S ribosome.

This is one of the proteins that bind and probably mediate the attachment of the 5S RNA into the large ribosomal subunit, where it forms part of the central protuberance. In the 70S ribosome it contacts protein S13 of the 30S subunit (bridge B1b), connecting the 2 subunits; this bridge is implicated in subunit movement. Contacts the P site tRNA; the 5S rRNA and some of its associated proteins might help stabilize positioning of ribosome-bound tRNAs. The sequence is that of Large ribosomal subunit protein uL5 from Haemophilus influenzae (strain 86-028NP).